Reading from the N-terminus, the 317-residue chain is Glycine--tRNA ligase alpha subunit (317 aa).

The protein belongs to the class-II aminoacyl-tRNA synthetase family. In terms of assembly, tetramer of two alpha and two beta subunits.

The protein resides in the cytoplasm. The catalysed reaction is tRNA(Gly) + glycine + ATP = glycyl-tRNA(Gly) + AMP + diphosphate. The polypeptide is Glycine--tRNA ligase alpha subunit (Lactococcus lactis subsp. cremoris (strain SK11)).